We begin with the raw amino-acid sequence, 400 residues long: WW domain-containing transcription regulator protein 1 (400 aa).

Lys-46 is covalently cross-linked (Glycyl lysine isopeptide (Lys-Gly) (interchain with G-Cter in ubiquitin)). Residues 52 to 117 (FFKEPDSGSH…QQHAHLRQQS (66 aa)) are disordered. A compositionally biased stretch (polar residues) spans 61–70 (HSRQSSTDSS). Phosphoserine is present on Ser-62. Ser-89 carries the post-translational modification Phosphoserine; by LATS2. A Phosphoserine modification is found at Ser-105. In terms of domain architecture, WW spans 124–157 (LPLPPGWEMTFTATGQRYFLNHIEKITTWQDPRK). The tract at residues 222-400 (PNALTTQQQQ…NKSEPFLTWL (179 aa)) is required for interaction with PALS1. Residues 225-259 (LTTQQQQQQKLRLQRIQMERERIRMRQEELMRQEA) are a coiled coil. Ser-295 is subject to Phosphoserine. At Ser-311 the chain carries Phosphoserine; by LATS2. The PDZ-binding signature appears at 394 to 400 (EPFLTWL).

Binds to SLC9A3R2 via the PDZ motif at the plasma membrane. Binds to YWHAZ in vivo and in vitro through the phosphoserine-binding motif RSHSSP. Interacts (via coiled-coil domain) with SMAD2 (via MH1 domain), SMAD3 and SMAD4. Interacts with MED15. Interacts with PAX8 and NKX2-1. Interacts with TEAD1, TEAD2, TEAD3 and TEAD4. Interacts (via WW domain) with PALS1. Interacts with LATS1. Interacts with YAP1 (when phosphorylated at 'Ser-127'). Interacts (via WW domain) with PRRG4 (via cytoplasmic domain). Interacts (via WW domain) with AMOTL2 (via PPXY motif); the interaction promotes WWTR1/TAZ localization to the cytoplasm and tight junctions, thereby inhibiting its transcriptional coactivator properties. Interacts (via WW domain) with AMOT isoform 1; the interaction facilitates translocation of WWTR1/TAZ to the cytoplasm. Phosphorylated by LATS2 and STK3/MST2. Phosphorylation by LATS2 results in creation of 14-3-3 binding sites, retention in the cytoplasm, and functional inactivation. Phosphorylation results in the inhibition of transcriptional coactivation through YWHAZ-mediated nuclear export. Phosphorylated in the nucleus by PRP4K; phosphorylation leads to nuclear exclusion. In terms of processing, ubiquitinated at Lys-46; leading to proteasomal degradation. Deubiquitinated and stabilized by UCHL1 at Lys-46; leading to inhibition of osteoclastogenesis. In terms of tissue distribution, highly expressed in kidney, heart, placenta and lung. Expressed in the thyroid tissue.

It is found in the nucleus. The protein resides in the cytoplasm. The protein localises to the cell membrane. It localises to the cell junction. Its subcellular location is the tight junction. Transcriptional coactivator which acts as a downstream regulatory target in the Hippo signaling pathway that plays a pivotal role in organ size control and tumor suppression by restricting proliferation and promoting apoptosis. The core of this pathway is composed of a kinase cascade wherein STK3/MST2 and STK4/MST1, in complex with its regulatory protein SAV1, phosphorylates and activates LATS1/2 in complex with its regulatory protein MOB1, which in turn phosphorylates and inactivates YAP1 oncoprotein and WWTR1/TAZ. WWTR1 enhances PAX8 and NKX2-1/TTF1-dependent gene activation. In conjunction with YAP1, involved in the regulation of TGFB1-dependent SMAD2 and SMAD3 nuclear accumulation. Plays a key role in coupling SMADs to the transcriptional machinery such as the mediator complex. Regulates embryonic stem-cell self-renewal, promotes cell proliferation and epithelial-mesenchymal transition. This is WW domain-containing transcription regulator protein 1 from Homo sapiens (Human).